A 459-amino-acid polypeptide reads, in one-letter code: Ribulose bisphosphate carboxylase (459 aa).

Asparagine 111 provides a ligand contact to substrate. Lysine 166 functions as the Proton acceptor in the catalytic mechanism. Residue lysine 168 coordinates substrate. Positions 191, 193, and 194 each coordinate Mg(2+). Lysine 191 bears the N6-carboxylysine mark. Histidine 287 serves as the catalytic Proton acceptor. Residues arginine 288, histidine 321, and serine 368 each coordinate substrate.

The protein belongs to the RuBisCO large chain family. Type II subfamily. As to quaternary structure, the complex is approximately 350 kDa when isolated from either T.denitrificans or R.sphaeroides, suggesting a homohexamer or homooctamer structure. Mg(2+) serves as cofactor.

It carries out the reaction 2 (2R)-3-phosphoglycerate + 2 H(+) = D-ribulose 1,5-bisphosphate + CO2 + H2O. The catalysed reaction is D-ribulose 1,5-bisphosphate + O2 = 2-phosphoglycolate + (2R)-3-phosphoglycerate + 2 H(+). Functionally, ruBisCO catalyzes two reactions: the carboxylation of D-ribulose 1,5-bisphosphate, the primary event in carbon dioxide fixation, as well as the oxidative fragmentation of the pentose substrate. Both reactions occur simultaneously and in competition at the same active site. This chain is Ribulose bisphosphate carboxylase (cbbM), found in Thiobacillus denitrificans (strain ATCC 25259 / T1).